The following is a 394-amino-acid chain: 1-deoxy-D-xylulose 5-phosphate reductoisomerase (394 aa).

NADPH-binding residues include T13, G14, S15, I16, and N127. K128 is a binding site for 1-deoxy-D-xylulose 5-phosphate. Residue E129 coordinates NADPH. D153 contacts Mn(2+). Positions 154, 155, 184, and 207 each coordinate 1-deoxy-D-xylulose 5-phosphate. Residue E155 participates in Mn(2+) binding. NADPH is bound at residue G213. 1-deoxy-D-xylulose 5-phosphate is bound by residues S220, N225, K226, and E229. E229 contacts Mn(2+).

The protein belongs to the DXR family. The cofactor is Mg(2+). Requires Mn(2+) as cofactor.

The catalysed reaction is 2-C-methyl-D-erythritol 4-phosphate + NADP(+) = 1-deoxy-D-xylulose 5-phosphate + NADPH + H(+). It participates in isoprenoid biosynthesis; isopentenyl diphosphate biosynthesis via DXP pathway; isopentenyl diphosphate from 1-deoxy-D-xylulose 5-phosphate: step 1/6. Its function is as follows. Catalyzes the NADPH-dependent rearrangement and reduction of 1-deoxy-D-xylulose-5-phosphate (DXP) to 2-C-methyl-D-erythritol 4-phosphate (MEP). The sequence is that of 1-deoxy-D-xylulose 5-phosphate reductoisomerase from Ectopseudomonas mendocina (strain ymp) (Pseudomonas mendocina).